The primary structure comprises 365 residues: 3-isopropylmalate dehydrogenase (365 aa).

78 to 91 (GKKWNNLPIEKRPE) is an NAD(+) binding site. 4 residues coordinate substrate: Arg99, Arg109, Arg139, and Asp228. Mg(2+) contacts are provided by Asp228, Asp252, and Asp256. Position 286 to 298 (286 to 298 (GSAPDIAGKNIAN)) interacts with NAD(+).

The protein belongs to the isocitrate and isopropylmalate dehydrogenases family. LeuB type 1 subfamily. As to quaternary structure, homodimer. Mg(2+) is required as a cofactor. The cofactor is Mn(2+).

The protein localises to the cytoplasm. It catalyses the reaction (2R,3S)-3-isopropylmalate + NAD(+) = 4-methyl-2-oxopentanoate + CO2 + NADH. Its pathway is amino-acid biosynthesis; L-leucine biosynthesis; L-leucine from 3-methyl-2-oxobutanoate: step 3/4. Catalyzes the oxidation of 3-carboxy-2-hydroxy-4-methylpentanoate (3-isopropylmalate) to 3-carboxy-4-methyl-2-oxopentanoate. The product decarboxylates to 4-methyl-2 oxopentanoate. This Buchnera aphidicola subsp. Macrosiphoniella ludovicianae protein is 3-isopropylmalate dehydrogenase.